A 210-amino-acid polypeptide reads, in one-letter code: Large ribosomal subunit protein uL3 (210 aa).

It belongs to the universal ribosomal protein uL3 family. In terms of assembly, part of the 50S ribosomal subunit. Forms a cluster with proteins L14 and L19.

One of the primary rRNA binding proteins, it binds directly near the 3'-end of the 23S rRNA, where it nucleates assembly of the 50S subunit. The sequence is that of Large ribosomal subunit protein uL3 from Pediococcus pentosaceus (strain ATCC 25745 / CCUG 21536 / LMG 10740 / 183-1w).